Consider the following 217-residue polypeptide: Large ribosomal subunit protein uL3 (217 aa).

The interval 127–162 (GFSRGPMSHGSKNHRAPGSTGAGTTPGRIYPGKRMA) is disordered. The segment covering 142–153 (APGSTGAGTTPG) has biased composition (low complexity).

The protein belongs to the universal ribosomal protein uL3 family. In terms of assembly, part of the 50S ribosomal subunit. Forms a cluster with proteins L14 and L19.

One of the primary rRNA binding proteins, it binds directly near the 3'-end of the 23S rRNA, where it nucleates assembly of the 50S subunit. This Prochlorococcus marinus (strain MIT 9301) protein is Large ribosomal subunit protein uL3.